Here is a 454-residue protein sequence, read N- to C-terminus: Pup--protein ligase (454 aa).

Residue E9 coordinates Mg(2+). R53 contributes to the ATP binding site. Y55 is a Mg(2+) binding site. D57 acts as the Proton acceptor in catalysis. E63 contributes to the Mg(2+) binding site. ATP is bound by residues T66 and W420.

Belongs to the Pup ligase/Pup deamidase family. Pup-conjugating enzyme subfamily.

The enzyme catalyses ATP + [prokaryotic ubiquitin-like protein]-L-glutamate + [protein]-L-lysine = ADP + phosphate + N(6)-([prokaryotic ubiquitin-like protein]-gamma-L-glutamyl)-[protein]-L-lysine.. The protein operates within protein degradation; proteasomal Pup-dependent pathway. It participates in protein modification; protein pupylation. Its function is as follows. Catalyzes the covalent attachment of the prokaryotic ubiquitin-like protein modifier Pup to the proteasomal substrate proteins, thereby targeting them for proteasomal degradation. This tagging system is termed pupylation. The ligation reaction involves the side-chain carboxylate of the C-terminal glutamate of Pup and the side-chain amino group of a substrate lysine. The protein is Pup--protein ligase of Arthrobacter sp. (strain FB24).